We begin with the raw amino-acid sequence, 142 residues long: Hemoglobin subunit alpha (142 aa).

Position 1 is an N-acetylserine (S1). In terms of domain architecture, Globin spans 1–142 (SLSDKDKAAV…VALALAERYR (142 aa)). H59 is a binding site for O2. H88 contributes to the heme b binding site.

It belongs to the globin family. As to quaternary structure, hb1 is a heterotetramer of two alpha chains and two beta-1 chains, while Hb2 is a heterotetramer of two alpha chains and two beta-2 chains. As to expression, red blood cells.

Its function is as follows. Involved in oxygen transport from gills to the various peripheral tissues. This Cygnodraco mawsoni (Antarctic dragonfish) protein is Hemoglobin subunit alpha (hba).